A 1258-amino-acid chain; its full sequence is Serine/threonine-protein kinase Nek1 (1258 aa).

Positions 4–258 (YVRLQKIGEG…VNSILEKGFI (255 aa)) constitute a Protein kinase domain. Residues 10–18 (IGEGSFGKA) and Lys33 contribute to the ATP site. The active-site Proton acceptor is the Asp128. Thr156 bears the Phosphothreonine mark. Thr162 bears the Phosphothreonine; by autocatalysis mark. The tract at residues 330–360 (HEKKPLQKHKQAHQTPEKRVNTGEERRKISE) is disordered. The span at 344–360 (TPEKRVNTGEERRKISE) shows a compositional bias: basic and acidic residues. Residues Ser414, Ser418, Ser428, and Ser438 each carry the phosphoserine modification. Disordered stretches follow at residues 578–600 (KLRG…EADM), 648–669 (KSSD…SKQQ), and 685–704 (VDSS…KTNN). A compositionally biased stretch (basic and acidic residues) spans 579 to 591 (LRGEKKEANHSEG). Position 653 is a phosphoserine (Ser653). Phosphothreonine is present on Thr661. Phosphoserine is present on Ser664. A compositionally biased stretch (basic and acidic residues) spans 691–700 (DTRETSEEMQ). Residues Ser798, Ser834, Ser868, Ser881, Ser1052, and Ser1126 each carry the phosphoserine modification. A disordered region spans residues 1118–1171 (REQPGEEYSEEEESVLKNSDVEPTANGTDVADEDDNPSSESALNEEWHSDNSDG).

It belongs to the protein kinase superfamily. NEK Ser/Thr protein kinase family. NIMA subfamily. As to quaternary structure, binds to CBY2. Found in a complex with CFAP410, NEK1 and SPATA7. Interacts with CFAP410. Interacts (via Ser-1052 phosphorylated form) with 14-3-3 proteins. Mg(2+) serves as cofactor. As to expression, high fetal expression in the brain and kidney.

It localises to the nucleus. The protein resides in the cytoplasm. It is found in the cytoskeleton. The protein localises to the microtubule organizing center. Its subcellular location is the centrosome. It catalyses the reaction L-seryl-[protein] + ATP = O-phospho-L-seryl-[protein] + ADP + H(+). The catalysed reaction is L-threonyl-[protein] + ATP = O-phospho-L-threonyl-[protein] + ADP + H(+). Its function is as follows. Phosphorylates serines and threonines, but also appears to possess tyrosine kinase activity. Involved in DNA damage checkpoint control and for proper DNA damage repair. In response to injury that includes DNA damage, NEK1 phosphorylates VDAC1 to limit mitochondrial cell death. May be implicated in the control of meiosis. Involved in cilium assembly. This is Serine/threonine-protein kinase Nek1 (NEK1) from Homo sapiens (Human).